The following is a 556-amino-acid chain: Arginine--tRNA ligase (556 aa).

The 'HIGH' region motif lies at 132 to 142 (ANPTGSLHLGH).

The protein belongs to the class-I aminoacyl-tRNA synthetase family. As to quaternary structure, monomer.

The protein resides in the cytoplasm. It carries out the reaction tRNA(Arg) + L-arginine + ATP = L-arginyl-tRNA(Arg) + AMP + diphosphate. This Anoxybacillus flavithermus (strain DSM 21510 / WK1) protein is Arginine--tRNA ligase.